The following is a 274-amino-acid chain: 2,3,4,5-tetrahydropyridine-2,6-dicarboxylate N-succinyltransferase (274 aa).

This sequence belongs to the transferase hexapeptide repeat family.

The protein localises to the cytoplasm. The catalysed reaction is (S)-2,3,4,5-tetrahydrodipicolinate + succinyl-CoA + H2O = (S)-2-succinylamino-6-oxoheptanedioate + CoA. Its pathway is amino-acid biosynthesis; L-lysine biosynthesis via DAP pathway; LL-2,6-diaminopimelate from (S)-tetrahydrodipicolinate (succinylase route): step 1/3. The sequence is that of 2,3,4,5-tetrahydropyridine-2,6-dicarboxylate N-succinyltransferase from Delftia acidovorans (strain DSM 14801 / SPH-1).